The sequence spans 533 residues: Purine-cytosine permease FCY2 (533 aa).

The Cytoplasmic segment spans residues 1-98 (MLEEGNNVYE…NAASMWFSAN (98 aa)). Residue lysine 16 forms a Glycyl lysine isopeptide (Lys-Gly) (interchain with G-Cter in ubiquitin) linkage. Serine 18 carries the post-translational modification Phosphoserine. The helical transmembrane segment at 99 to 119 (MVIASYALGALGPMVFGLNFG) threads the bilayer. Over 120-121 (QS) the chain is Extracellular. A helical membrane pass occupies residues 122 to 141 (VLVIIFFNIMGLIFVAFFSV). At 142-198 (FGAELGLRQMILSRYLVGNVTARIFSLINVIACVGWGIVNTSVSAQLLNMVNEGSGH) the chain is on the cytoplasmic side. Positions 165–184 (IFSLINVIACVGWGIVNTSV) are surface seeking. The helical transmembrane segment at 199–218 (VCPIWAGCLIIIGGTVLVTF) threads the bilayer. Residues 219 to 256 (FGYSVIHAYEKWSWVPNFAVFLVIIAQLSRSGKFKGGE) are Extracellular-facing. Residues 257-276 (WVGGATTAGSVLSFGSSIFG) form a helical membrane-spanning segment. The Cytoplasmic segment spans residues 277 to 300 (FAAGWTTYAADYTVYMPKSTNKYK). Residues 301-320 (IFFSLVAGLAFPLFFTMILG) form a helical membrane-spanning segment. The Extracellular portion of the chain corresponds to 321-347 (AASAMAALNDPTWKAYYDKNAMGGVIY). Residues 348 to 367 (AILVPNSLNGFGQFCCVLLA) traverse the membrane as a helical segment. Residues 368-398 (LSTIANNIPNMYTVALSAQALWAPLAKIPRV) are Cytoplasmic-facing. The chain crosses the membrane as a helical span at residues 399–418 (VWTMAGNAATLGISIPATYY). Over 419–465 (FDGFMENFMDSIGYYLAIYIAISCSEHFFYRRSFSAYNIDDWDNWEH) the chain is Extracellular. The chain crosses the membrane as a helical span at residues 466-485 (LPIGIAGTAALIVGAFGVAL). Residues 486–533 (GMCQTYWVGEIGRLIGKYGGDIGFELGASWAFIIYNILRPLELKYFGR) lie on the Cytoplasmic side of the membrane.

This sequence belongs to the purine-cytosine permease (2.A.39) family. Post-translationally, not N-glycosylated.

The protein localises to the membrane. Its function is as follows. This permease has a broad specificity towards purines, and also transport cytosine and 5-methylcytosine but neither uracil nor thymine. In Saccharomyces cerevisiae (strain ATCC 204508 / S288c) (Baker's yeast), this protein is Purine-cytosine permease FCY2 (FCY2).